The following is a 202-amino-acid chain: High mobility group protein B3 (202 aa).

DNA-binding regions (HMG box) lie at residues 9–79 and 93–161; these read PKGK…KDYG and PKRP…ADYK. Cysteine sulfonic acid (-SO3H); alternate occurs at positions 23 and 45. Cys23 and Cys45 form a disulfide bridge. Residues 71 to 98 are disordered; it reads YDREMKDYGPAKGGKKKKDPNAPKRPPS. Cys104 is subject to Cysteine sulfonic acid (-SO3H). The segment at 161 to 202 is disordered; sequence KSKGKFDGAKGAATKAARKKVEEEDEEEEEDEEEEDEDDDDE. The segment covering 183 to 202 has biased composition (acidic residues); sequence EEDEEEEEDEEEEDEDDDDE.

It belongs to the HMGB family. Reduction/oxidation of cysteine residues Cys-23, Cys-45 and Cys-104 and a possible intramolecular disulfide bond involving Cys-23 and Cys-45 give rise to different redox forms with specific functional activities in various cellular compartments: 1- fully reduced HMGB3 (HMGB3C23hC45hC104h), 2- disulfide HMGB3 (HMGB3C23-C45C104h) and 3- sulfonyl HMGB3 (HMGB3C23soC45soC104so).

The protein resides in the nucleus. The protein localises to the chromosome. It localises to the cytoplasm. In terms of biological role, multifunctional protein with various roles in different cellular compartments. May act in a redox sensitive manner. Associates with chromatin and binds DNA with a preference for non-canonical DNA structures such as single-stranded DNA. Can bend DNA and enhance DNA flexibility by looping thus providing a mechanism to promote activities on various gene promoters. Binds to the delta-1 crystallin/ASL1 enhancer. Proposed to be involved in the innate immune response to nucleic acids by acting as a cytoplasmic promiscuous immunogenic DNA/RNA sensor. In Gallus gallus (Chicken), this protein is High mobility group protein B3 (HMGB3).